The chain runs to 49 residues: Large ribosomal subunit protein bL33B (49 aa).

The protein belongs to the bacterial ribosomal protein bL33 family.

The polypeptide is Large ribosomal subunit protein bL33B (Limosilactobacillus reuteri subsp. reuteri (strain JCM 1112) (Lactobacillus reuteri)).